The chain runs to 397 residues: Metal tolerance protein 4 (397 aa).

The segment covering Met1–Arg19 has biased composition (basic and acidic residues). The interval Met1–Gly27 is disordered. Over Met1–Lys104 the chain is Cytoplasmic. A helical transmembrane segment spans residues Ile105–Ile122. Over Lys123–Ser126 the chain is Vacuolar. A helical transmembrane segment spans residues Ile127 to Trp147. The Cytoplasmic segment spans residues Phe148–Pro170. Residues Val171–Ala191 form a helical membrane-spanning segment. Residues Val192 to Gln208 lie on the Vacuolar side of the membrane. A helical transmembrane segment spans residues Leu209–Tyr229. Topologically, residues Cys230–Asp248 are cytoplasmic. A helical membrane pass occupies residues Val249–Ile269. A topological domain (vacuolar) is located at residue Asp270. The helical transmembrane segment at Pro271 to Glu291 threads the bilayer. Topologically, residues Asn292 to Pro397 are cytoplasmic.

The protein belongs to the cation diffusion facilitator (CDF) transporter (TC 2.A.4) family. SLC30A subfamily.

The protein resides in the vacuole membrane. Functionally, involved in sequestration of excess metal in the cytoplasm into vacuoles to maintain metal homeostasis. The chain is Metal tolerance protein 4 (MTP4) from Oryza sativa subsp. japonica (Rice).